The chain runs to 31 residues: Cytochrome b6-f complex subunit 6 (31 aa).

The chain crosses the membrane as a helical span at residues 4-24 (IFSYIALLLSALVITLTCYIG).

Belongs to the PetL family. The 4 large subunits of the cytochrome b6-f complex are cytochrome b6, subunit IV (17 kDa polypeptide, PetD), cytochrome f and the Rieske protein, while the 4 small subunits are PetG, PetL, PetM and PetN. The complex functions as a dimer.

The protein resides in the plastid. Its subcellular location is the chloroplast thylakoid membrane. In terms of biological role, component of the cytochrome b6-f complex, which mediates electron transfer between photosystem II (PSII) and photosystem I (PSI), cyclic electron flow around PSI, and state transitions. PetL is important for photoautotrophic growth as well as for electron transfer efficiency and stability of the cytochrome b6-f complex. This chain is Cytochrome b6-f complex subunit 6, found in Chlorella vulgaris (Green alga).